Consider the following 376-residue polypeptide: Putative phosphoserine aminotransferase (376 aa).

Position 50 (arginine 50) interacts with L-glutamate. Pyridoxal 5'-phosphate contacts are provided by residues 84 to 85 (AT), phenylalanine 108, threonine 154, aspartate 176, and glutamine 199. Lysine 200 is subject to N6-(pyridoxal phosphate)lysine. 251–252 (NT) is a binding site for pyridoxal 5'-phosphate.

It belongs to the class-V pyridoxal-phosphate-dependent aminotransferase family. SerC subfamily. As to quaternary structure, homodimer. It depends on pyridoxal 5'-phosphate as a cofactor.

Its subcellular location is the cytoplasm. The catalysed reaction is O-phospho-L-serine + 2-oxoglutarate = 3-phosphooxypyruvate + L-glutamate. It carries out the reaction 4-(phosphooxy)-L-threonine + 2-oxoglutarate = (R)-3-hydroxy-2-oxo-4-phosphooxybutanoate + L-glutamate. It functions in the pathway amino-acid biosynthesis; L-serine biosynthesis; L-serine from 3-phospho-D-glycerate: step 2/3. It participates in cofactor biosynthesis; pyridoxine 5'-phosphate biosynthesis; pyridoxine 5'-phosphate from D-erythrose 4-phosphate: step 3/5. Its function is as follows. Catalyzes the reversible conversion of 3-phosphohydroxypyruvate to phosphoserine and of 3-hydroxy-2-oxo-4-phosphonooxybutanoate to phosphohydroxythreonine. The polypeptide is Putative phosphoserine aminotransferase (Mycobacterium bovis (strain ATCC BAA-935 / AF2122/97)).